The primary structure comprises 59 residues: Arabinogalactan protein 13 (59 aa).

A signal peptide spans M1–A27. 4-hydroxyproline is present on residues P31, P33, and P35. O-linked (Ara...) hydroxyproline glycosylation is found at P31, P33, and P35. S37 carries GPI-anchor amidated serine lipidation. Positions D38–F59 are cleaved as a propeptide — removed in mature form.

It belongs to the AG-peptide AGP family. Contains 4-hydroxyproline; hydroxylated on Pro-31, Pro-33 and Pro-35. In terms of processing, O-glycosylated on hydroxyprolines; noncontiguous hydroxylproline residues are glycosylated with arabinogalactan.

It localises to the cell membrane. Proteoglycan that seems to be implicated in diverse developmental roles such as differentiation, cell-cell recognition, embryogenesis and programmed cell death. The polypeptide is Arabinogalactan protein 13 (Arabidopsis thaliana (Mouse-ear cress)).